The primary structure comprises 136 residues: Large ribosomal subunit protein uL22 (136 aa).

It belongs to the universal ribosomal protein uL22 family. In terms of assembly, part of the 50S ribosomal subunit.

Functionally, this protein binds specifically to 23S rRNA; its binding is stimulated by other ribosomal proteins, e.g. L4, L17, and L20. It is important during the early stages of 50S assembly. It makes multiple contacts with different domains of the 23S rRNA in the assembled 50S subunit and ribosome. In terms of biological role, the globular domain of the protein is located near the polypeptide exit tunnel on the outside of the subunit, while an extended beta-hairpin is found that lines the wall of the exit tunnel in the center of the 70S ribosome. In Bacteroides thetaiotaomicron (strain ATCC 29148 / DSM 2079 / JCM 5827 / CCUG 10774 / NCTC 10582 / VPI-5482 / E50), this protein is Large ribosomal subunit protein uL22.